A 612-amino-acid polypeptide reads, in one-letter code: Oligopeptide transport ATP-binding protein OppD (612 aa).

Positions 5 to 255 constitute an ABC transporter 1 domain; it reads LEVTDLAVTF…RRMPYTVGLL (251 aa). Residues Ser-43, Gly-44, Ser-45, Gly-46, Lys-47, Ser-48, Ala-49, Tyr-61, Gln-96, Arg-147, Gly-158, Glu-159, and His-213 each coordinate ATP. Positions 286, 292, 299, and 317 each coordinate [4Fe-4S] cluster. The region spanning 350 to 600 is the ABC transporter 2 domain; the sequence is VRVRHLVKTY…PKHEYTRRLL (251 aa). ATP-binding residues include Ser-396, Gly-397, Ser-398, Gly-399, Lys-400, Ser-401, Thr-402, Gln-445, Arg-495, Glu-499, Gly-503, and His-558.

It belongs to the ABC transporter superfamily. In terms of assembly, the complex is composed of an ATP-binding protein (OppD), two transmembrane proteins (OppB and OppC) and a solute-binding protein (OppA).

It is found in the cell inner membrane. The catalysed reaction is a [peptide](out) + ATP + H2O = a [peptide](in) + ADP + phosphate + H(+). Its function is as follows. Part of the ABC transporter complex OppABCD involved in the uptake of oligopeptides. Responsible for energy coupling to the transport system. The protein is Oligopeptide transport ATP-binding protein OppD of Mycobacterium bovis (strain ATCC BAA-935 / AF2122/97).